A 541-amino-acid chain; its full sequence is 2-succinyl-5-enolpyruvyl-6-hydroxy-3-cyclohexene-1-carboxylate synthase (541 aa).

It belongs to the TPP enzyme family. MenD subfamily. Homodimer. The cofactor is Mg(2+). Mn(2+) serves as cofactor. It depends on thiamine diphosphate as a cofactor.

The enzyme catalyses isochorismate + 2-oxoglutarate + H(+) = 5-enolpyruvoyl-6-hydroxy-2-succinyl-cyclohex-3-ene-1-carboxylate + CO2. It participates in quinol/quinone metabolism; 1,4-dihydroxy-2-naphthoate biosynthesis; 1,4-dihydroxy-2-naphthoate from chorismate: step 2/7. The protein operates within quinol/quinone metabolism; menaquinone biosynthesis. Functionally, catalyzes the thiamine diphosphate-dependent decarboxylation of 2-oxoglutarate and the subsequent addition of the resulting succinic semialdehyde-thiamine pyrophosphate anion to isochorismate to yield 2-succinyl-5-enolpyruvyl-6-hydroxy-3-cyclohexene-1-carboxylate (SEPHCHC). This chain is 2-succinyl-5-enolpyruvyl-6-hydroxy-3-cyclohexene-1-carboxylate synthase, found in Rhodococcus opacus (strain B4).